Reading from the N-terminus, the 182-residue chain is Inner membrane-spanning protein YciB (182 aa).

5 helical membrane passes run 22-42 (IYIASGALIAATALQLIVTYA), 50-70 (MHLITFVMVTFFGTLTLIFHD), 72-92 (AFIKWKVTVVYALFAIALAVS), 118-138 (VTWYWVSFFVACGLVNIYVAF), and 148-168 (FKVFGLTALTLINTVITVVYL).

It belongs to the YciB family.

It localises to the cell inner membrane. In terms of biological role, plays a role in cell envelope biogenesis, maintenance of cell envelope integrity and membrane homeostasis. The sequence is that of Inner membrane-spanning protein YciB from Shewanella woodyi (strain ATCC 51908 / MS32).